A 333-amino-acid polypeptide reads, in one-letter code: Nucleoid-associated protein HAPS_0704 (333 aa).

Belongs to the YejK family.

The protein resides in the cytoplasm. It is found in the nucleoid. This chain is Nucleoid-associated protein HAPS_0704, found in Glaesserella parasuis serovar 5 (strain SH0165) (Haemophilus parasuis).